A 327-amino-acid polypeptide reads, in one-letter code: D-threonate 4-phosphate dehydrogenase (327 aa).

Substrate contacts are provided by His-139 and Thr-140. A divalent metal cation contacts are provided by His-169, His-213, and His-268. Substrate is bound by residues Lys-276, Asn-285, and Arg-294.

The protein belongs to the PdxA family. PdxA2 subfamily. In terms of assembly, homodimer. A divalent metal cation is required as a cofactor.

It carries out the reaction 4-O-phospho-D-threonate + NAD(+) = dihydroxyacetone phosphate + CO2 + NADH. In terms of biological role, catalyzes the NAD-dependent oxidation and subsequent decarboxylation of D-threonate 4-phosphate to produce dihydroxyacetone phosphate (DHAP). Can also use 4-hydroxy-L-threonine 4-phosphate as substrate. This Salmonella typhimurium (strain LT2 / SGSC1412 / ATCC 700720) protein is D-threonate 4-phosphate dehydrogenase.